Here is a 411-residue protein sequence, read N- to C-terminus: LIM domain-binding protein 1 (411 aa).

2 disordered regions span residues P284 to L330 and D367 to Q411. The span at S302–N318 shows a compositional bias: low complexity. In terms of domain architecture, LIM interaction domain (LID) spans D336–E375.

The protein belongs to the LDB family. As to quaternary structure, forms homodimers and heterodimers. First expressed at stages 15-16 in presumptive limb mesoderm. As limb outgrowth proceeds, expressed in the entire limb bud, concentrating in the distal mesoderm throughout limb development. Both hindlimbs and forelimbs exhibit similar expression patterns.

It is found in the nucleus. Its function is as follows. Binds to the LIM domain of a wide variety of LIM domain-containing transcription factors. In Gallus gallus (Chicken), this protein is LIM domain-binding protein 1.